The following is a 399-amino-acid chain: Enoyl-[acyl-carrier-protein] reductase [NADH] 2 (399 aa).

NAD(+)-binding positions include 48-53 (GASSGF), 75-76 (FE), 112-113 (DA), and 141-142 (LA). Tyrosine 227 is a substrate binding site. The active-site Proton donor is tyrosine 237. Residues lysine 246 and 275 to 277 (LVT) each bind NAD(+).

It belongs to the TER reductase family. In terms of assembly, monomer.

The catalysed reaction is a 2,3-saturated acyl-[ACP] + NAD(+) = a (2E)-enoyl-[ACP] + NADH + H(+). Its pathway is lipid metabolism; fatty acid biosynthesis. In terms of biological role, involved in the final reduction of the elongation cycle of fatty acid synthesis (FAS II). Catalyzes the reduction of a carbon-carbon double bond in an enoyl moiety that is covalently linked to an acyl carrier protein (ACP). This Vibrio parahaemolyticus serotype O3:K6 (strain RIMD 2210633) protein is Enoyl-[acyl-carrier-protein] reductase [NADH] 2.